An 842-amino-acid chain; its full sequence is Elongation factor 2 (842 aa).

One can recognise a tr-type G domain in the interval 17–253 (TNVRNMSVIA…LWGDSYFNPK (237 aa)). Residues 26–33 (AHVDHGKS), 158–161 (NKVD), and 213–215 (SGL) contribute to the GTP site. Histidine 699 is modified (diphthamide).

Belongs to the TRAFAC class translation factor GTPase superfamily. Classic translation factor GTPase family. EF-G/EF-2 subfamily.

The protein resides in the cytoplasm. It carries out the reaction GTP + H2O = GDP + phosphate + H(+). In terms of biological role, catalyzes the GTP-dependent ribosomal translocation step during translation elongation. During this step, the ribosome changes from the pre-translocational (PRE) to the post-translocational (POST) state as the newly formed A-site-bound peptidyl-tRNA and P-site-bound deacylated tRNA move to the P and E sites, respectively. Catalyzes the coordinated movement of the two tRNA molecules, the mRNA and conformational changes in the ribosome. This Debaryomyces hansenii (strain ATCC 36239 / CBS 767 / BCRC 21394 / JCM 1990 / NBRC 0083 / IGC 2968) (Yeast) protein is Elongation factor 2 (EFT1).